The primary structure comprises 55 residues: Neurotoxin BmP08 (55 aa).

Residues M1 to G23 form the signal peptide. 3 disulfides stabilise this stretch: C30–C45, C36–C50, and C39–C53.

Expressed by the venom gland.

The protein localises to the secreted. This chain is Neurotoxin BmP08, found in Olivierus martensii (Manchurian scorpion).